The primary structure comprises 91 residues: DNA-binding protein HRL53 (91 aa).

The interval 57-91 (ATKGRNPSTGAEVDIPARNVPKFTPGKGLKDAVNG) is disordered.

The protein belongs to the bacterial histone-like protein family.

Histone-like DNA-binding protein which is capable of wrapping DNA to stabilize it, and thus to prevent its denaturation under extreme environmental conditions. Binds to nod promoters and induces DNA binding. This Rhizobium leguminosarum protein is DNA-binding protein HRL53.